Here is a 396-residue protein sequence, read N- to C-terminus: MSEYSLFTSESVSEGHPDKIADQISDAVLDAIIAQDKYARVACETLVKTGVAIIAGEVTTSAWVDLEDLVRKVIIDIGYNSSDVGFDGATCAVMNIIGKQSVDIAQGVDRSKPEDQGAGDQGLMFGYASNETEVLMPAPICFSHRLVERQAEARKSGLLPWLRPDAKSQVTCRYENGKVVGIDAVVLSTQHNPEVSQKDLQEAVMELIVKHTLPAELLHKGTQYHINPTGNFIIGGPVGDCGLTGRKIIVDSYGGMARHGGGAFSGKDPSKVDRSAAYAGRYVAKNIVAAGLAERCEIQVSYAIGVAQPTSISINTFGTGKVSDDKIIQLVRECFDLRPYAITTMLDLLHPMYQETAAYGHFGRTPQQKTVGDDTFTTFTWERTDRAQSLRDAAGL.

His-16 provides a ligand contact to ATP. Residue Asp-18 coordinates Mg(2+). Position 44 (Glu-44) interacts with K(+). L-methionine-binding residues include Glu-57 and Gln-100. The segment at 100–110 is flexible loop; that stretch reads QSVDIAQGVDR. ATP is bound by residues 165–167, Asp-240, 246–247, Ala-263, and Lys-267; these read DAK and RK. An L-methionine-binding site is contributed by Asp-240. Position 271 (Lys-271) interacts with L-methionine.

The protein belongs to the AdoMet synthase family. Homotetramer; dimer of dimers. It depends on Mg(2+) as a cofactor. Requires K(+) as cofactor.

The protein localises to the cytoplasm. The enzyme catalyses L-methionine + ATP + H2O = S-adenosyl-L-methionine + phosphate + diphosphate. The protein operates within amino-acid biosynthesis; S-adenosyl-L-methionine biosynthesis; S-adenosyl-L-methionine from L-methionine: step 1/1. In terms of biological role, catalyzes the formation of S-adenosylmethionine (AdoMet) from methionine and ATP. The overall synthetic reaction is composed of two sequential steps, AdoMet formation and the subsequent tripolyphosphate hydrolysis which occurs prior to release of AdoMet from the enzyme. In Pseudomonas putida (strain ATCC 700007 / DSM 6899 / JCM 31910 / BCRC 17059 / LMG 24140 / F1), this protein is S-adenosylmethionine synthase.